The following is a 191-amino-acid chain: Ion-translocating oxidoreductase complex subunit B (191 aa).

The segment at 1 to 26 is hydrophobic; sequence MSLVLVAVLALLGLCLIAGAILGFAA. Residues 32-90 enclose the 4Fe-4S domain; that stretch reads EGDPIAEQINALLPQTQCGQCGYPGCKPYAEAIAGGDKINKCPPGGEATIQALADLLDV. [4Fe-4S] cluster contacts are provided by Cys49, Cys52, Cys57, Cys73, Cys114, Cys117, Cys120, Cys124, Cys144, Cys147, Cys150, and Cys154. 2 4Fe-4S ferredoxin-type domains span residues 105–134 and 135–164; these read MVAF…GAAR and QMHT…MIEV.

It belongs to the 4Fe4S bacterial-type ferredoxin family. RnfB subfamily. In terms of assembly, the complex is composed of six subunits: RnfA, RnfB, RnfC, RnfD, RnfE and RnfG. The cofactor is [4Fe-4S] cluster.

It is found in the cell inner membrane. Functionally, part of a membrane-bound complex that couples electron transfer with translocation of ions across the membrane. This Ectopseudomonas mendocina (strain ymp) (Pseudomonas mendocina) protein is Ion-translocating oxidoreductase complex subunit B.